Reading from the N-terminus, the 90-residue chain is MAVKIRLKRMGTKKKPFYRIVVADSRSPRDGRFIETIGTYDPVAEPAQVKIDEELALKWLQNGAKPSDTVRSLLSKQGILEKFHNLKYGK.

The protein belongs to the bacterial ribosomal protein bS16 family.

This chain is Small ribosomal subunit protein bS16, found in Geobacillus kaustophilus (strain HTA426).